The following is a 91-amino-acid chain: Small ribosomal subunit protein bS20 (91 aa).

The span at 1–21 shows a compositional bias: basic and acidic residues; that stretch reads MPLHKSAEKRLRQSARRNERN. 2 disordered regions span residues 1-25 and 70-91; these read MPLHKSAEKRLRQSARRNERNRARK and PNKASRKKSQLSRMLNNYMKAE. Residues 70-79 are compositionally biased toward basic residues; the sequence is PNKASRKKSQ.

Belongs to the bacterial ribosomal protein bS20 family.

In terms of biological role, binds directly to 16S ribosomal RNA. The chain is Small ribosomal subunit protein bS20 from Chlorobium phaeobacteroides (strain BS1).